Here is a 247-residue protein sequence, read N- to C-terminus: Neurotrophic factor BDNF precursor form (247 aa).

A signal peptide spans M1–A18. Residues A19–R128 constitute a propeptide that is removed on maturation. N-linked (GlcNAc...) asparagine glycosylation occurs at N121. 3 disulfides stabilise this stretch: C141-C208, C186-C237, and C196-C239.

The protein belongs to the NGF-beta family. In terms of assembly, monomers and homodimers. Binds to NTRK2/TRKB. Can form heterodimers with other neurotrophin family members, such as NTF3 and NTF4 (in vitro), but the physiological relevance of this is not clear. BDNF precursor form: interacts with the heterodimer formed by NGFR and SORCS2. Mature BDNF has much lower affinity for the heterodimer formed by NGFR and SORCS2. Post-translationally, N-glycosylated and glycosulfated, contrary to mature BDNF. Mature BDNF is produced by proteolytic removal of the propeptide, catalyzed by a FURIN family member. In addition, the precursor form is proteolytically cleaved within the propeptide, but this is not an obligatory intermediate for the production of mature BDNF. Can be converted into mature BDNF by plasmin (PLG).

Its subcellular location is the secreted. In terms of biological role, important signaling molecule that activates signaling cascades downstream of NTRK2. During development, promotes the survival and differentiation of selected neuronal populations of the peripheral and central nervous systems. Participates in axonal growth, pathfinding and in the modulation of dendritic growth and morphology. Major regulator of synaptic transmission and plasticity at adult synapses in many regions of the CNS. The versatility of BDNF is emphasized by its contribution to a range of adaptive neuronal responses including long-term potentiation (LTP), long-term depression (LTD), certain forms of short-term synaptic plasticity, as well as homeostatic regulation of intrinsic neuronal excitability. Important signaling molecule that activates signaling cascades downstream of NTRK2. Activates signaling cascades via the heterodimeric receptor formed by NGFR and SORCS2. Signaling via NGFR and SORCS2 plays a role in synaptic plasticity and long-term depression (LTD). Binding to NGFR and SORCS2 promotes neuronal apoptosis. Promotes neuronal growth cone collapse. This Helarctos malayanus (Malayan sun bear) protein is Neurotrophic factor BDNF precursor form (BDNF).